The following is a 469-amino-acid chain: IME2-dependent-signaling protein (469 aa).

Position 1 is an N-acetylmethionine (methionine 1). A Phosphothreonine modification is found at threonine 13. Disordered regions lie at residues 22-55, 67-92, and 117-143; these read KSWS…PATM, ARGS…QQQQ, and DLTL…PPLT. A phosphoserine mark is found at serine 23, serine 27, and serine 39. Composition is skewed to polar residues over residues 25–42 and 67–82; these read SESQ…SPIG and ARGS…GSSQ. 5 positions are modified to phosphoserine: serine 122, serine 130, serine 136, serine 147, and serine 148.

Functionally, seems to act indirectly to modify IME2 activity, thus permitting IME2 to carry out later meiotic functions. The chain is IME2-dependent-signaling protein (IDS2) from Saccharomyces cerevisiae (strain ATCC 204508 / S288c) (Baker's yeast).